The primary structure comprises 88 residues: Small ribosomal subunit protein bS16 (88 aa).

Belongs to the bacterial ribosomal protein bS16 family.

The chain is Small ribosomal subunit protein bS16 from Syntrophomonas wolfei subsp. wolfei (strain DSM 2245B / Goettingen).